A 213-amino-acid chain; its full sequence is Cytochrome b6 (213 aa).

A helical membrane pass occupies residues 30 to 50 (IFYCLGGLTLLCFIIQCLTGV). Cys-33 is a binding site for heme c. Heme b-binding residues include His-84 and His-98. 3 helical membrane-spanning segments follow: residues 88–108 (CQLM…TGAF), 114–134 (LNWV…FTGY), and 184–204 (LHVM…FIMI). His-185 and His-200 together coordinate heme b.

Belongs to the cytochrome b family. PetB subfamily. As to quaternary structure, the subunits of the cytochrome bc complex are a Rieske Fe-S protein (PetC), cytochrome b6 (PetB), subunit IV (PetD), and a diheme cytochrome c (PetX). Heme b serves as cofactor. Requires heme c as cofactor.

It is found in the cell membrane. Its function is as follows. Component of the cytochrome bc complex which donates electrons to the photosynthetic reaction center. The sequence is that of Cytochrome b6 from Heliobacterium modesticaldum (strain ATCC 51547 / Ice1).